The primary structure comprises 437 residues: MTRKLFIETHGCQMNEYDSSRMVDLLGEHQAMEITENPAEADVILLNTCSIREKAQEKVFSQLGRWRELKQDNPQLVIGVGGCVASQEGAAIRDRAPYVDVVFGPQTLHRLPEMIDAARTTRTPQVDISFPEIEKFDRLPEPRVDGPSAYVSVMEGCSKYCTFCVVPYTRGEEVSRPLADVLAEIVHLAENGVKEVTLLGQNVNGYRHDGHDFADLLHAVAAIDGIGRIRYTTSHPLEFSDAIIQAHADIPQLVKYLHLPVQAGSDRILAAMKRNHTALEYKSRIRRLKAAVPDILISSDFIVGFPGETDKDFEQTMKLIEDVGFDFSYSFVYSARPGTPAADLADDTPEEVKKQRLAILQQRINQQGFENSRRMVGTTQRILVSDYSKKDPGMLQGRTEHNRIVNFRCDNPRLIGQFVDVHIDDALPHSLRGSLLS.

The MTTase N-terminal domain occupies 3–120; it reads RKLFIETHGC…LPEMIDAART (118 aa). [4Fe-4S] cluster-binding residues include Cys12, Cys49, Cys83, Cys157, Cys161, and Cys164. The region spanning 143–370 is the Radical SAM core domain; the sequence is RVDGPSAYVS…QQRINQQGFE (228 aa). The TRAM domain maps to 373-437; it reads RRMVGTTQRI…PHSLRGSLLS (65 aa).

The protein belongs to the methylthiotransferase family. MiaB subfamily. In terms of assembly, monomer. The cofactor is [4Fe-4S] cluster.

It is found in the cytoplasm. It carries out the reaction N(6)-dimethylallyladenosine(37) in tRNA + (sulfur carrier)-SH + AH2 + 2 S-adenosyl-L-methionine = 2-methylsulfanyl-N(6)-dimethylallyladenosine(37) in tRNA + (sulfur carrier)-H + 5'-deoxyadenosine + L-methionine + A + S-adenosyl-L-homocysteine + 2 H(+). In terms of biological role, catalyzes the methylthiolation of N6-(dimethylallyl)adenosine (i(6)A), leading to the formation of 2-methylthio-N6-(dimethylallyl)adenosine (ms(2)i(6)A) at position 37 in tRNAs that read codons beginning with uridine. This is tRNA-2-methylthio-N(6)-dimethylallyladenosine synthase from Stutzerimonas stutzeri (strain A1501) (Pseudomonas stutzeri).